Reading from the N-terminus, the 184-residue chain is Thymidine kinase (184 aa).

Residues 15-22 and 89-92 contribute to the ATP site; these read GPMFSGKS and DEIQ. Residue Glu90 is the Proton acceptor of the active site. Residues Cys146, Cys149, Cys178, and Cys181 each coordinate Zn(2+).

Belongs to the thymidine kinase family. As to quaternary structure, homotetramer.

The protein localises to the cytoplasm. It carries out the reaction thymidine + ATP = dTMP + ADP + H(+). The protein is Thymidine kinase of Mesomycoplasma hyopneumoniae (strain 232) (Mycoplasma hyopneumoniae).